The following is a 237-amino-acid chain: Large ribosomal subunit protein uL1 (237 aa).

The protein belongs to the universal ribosomal protein uL1 family. In terms of assembly, part of the 50S ribosomal subunit.

In terms of biological role, binds directly to 23S rRNA. The L1 stalk is quite mobile in the ribosome, and is involved in E site tRNA release. Functionally, protein L1 is also a translational repressor protein, it controls the translation of the L11 operon by binding to its mRNA. The chain is Large ribosomal subunit protein uL1 from Dehalococcoides mccartyi (strain ATCC BAA-2100 / JCM 16839 / KCTC 5957 / BAV1).